The chain runs to 588 residues: Aspartate--tRNA ligase (588 aa).

Glu-172 is a binding site for L-aspartate. An aspartate region spans residues 196-199 (QLFK). Residue Arg-218 participates in L-aspartate binding. Residues 218 to 220 (RDE) and Gln-227 each bind ATP. L-aspartate is bound at residue His-449. Residue Glu-483 coordinates ATP. Arg-490 lines the L-aspartate pocket. 535–538 (GLDR) serves as a coordination point for ATP.

This sequence belongs to the class-II aminoacyl-tRNA synthetase family. Type 1 subfamily. As to quaternary structure, homodimer.

Its subcellular location is the cytoplasm. The catalysed reaction is tRNA(Asp) + L-aspartate + ATP = L-aspartyl-tRNA(Asp) + AMP + diphosphate. Its function is as follows. Catalyzes the attachment of L-aspartate to tRNA(Asp) in a two-step reaction: L-aspartate is first activated by ATP to form Asp-AMP and then transferred to the acceptor end of tRNA(Asp). The sequence is that of Aspartate--tRNA ligase from Pasteurella multocida (strain Pm70).